The sequence spans 193 residues: ATP synthase subunit delta (193 aa).

It belongs to the ATPase delta chain family. In terms of assembly, F-type ATPases have 2 components, F(1) - the catalytic core - and F(0) - the membrane proton channel. F(1) has five subunits: alpha(3), beta(3), gamma(1), delta(1), epsilon(1). F(0) has three main subunits: a(1), b(2) and c(10-14). The alpha and beta chains form an alternating ring which encloses part of the gamma chain. F(1) is attached to F(0) by a central stalk formed by the gamma and epsilon chains, while a peripheral stalk is formed by the delta and b chains.

Its subcellular location is the cell inner membrane. In terms of biological role, f(1)F(0) ATP synthase produces ATP from ADP in the presence of a proton or sodium gradient. F-type ATPases consist of two structural domains, F(1) containing the extramembraneous catalytic core and F(0) containing the membrane proton channel, linked together by a central stalk and a peripheral stalk. During catalysis, ATP synthesis in the catalytic domain of F(1) is coupled via a rotary mechanism of the central stalk subunits to proton translocation. Its function is as follows. This protein is part of the stalk that links CF(0) to CF(1). It either transmits conformational changes from CF(0) to CF(1) or is implicated in proton conduction. The chain is ATP synthase subunit delta from Allorhizobium ampelinum (strain ATCC BAA-846 / DSM 112012 / S4) (Agrobacterium vitis (strain S4)).